The primary structure comprises 212 residues: Regulatory protein RecX (212 aa).

This sequence belongs to the RecX family.

It localises to the cytoplasm. In terms of biological role, modulates RecA activity. The protein is Regulatory protein RecX of Clostridioides difficile (strain 630) (Peptoclostridium difficile).